The primary structure comprises 529 residues: Sodium/hydrogen exchanger 4 (529 aa).

Residues 1-19 (MSIGLTEFVTNKLAAEHPQ) are Cytoplasmic-facing. Residues 20–40 (VIPISVFIAILCLCLVIGHLL) form a helical membrane-spanning segment. Residues 41 to 45 (EENRW) lie on the Vacuolar side of the membrane. A helical membrane pass occupies residues 46–66 (VNESITAILVGAASGTVILLI). The Cytoplasmic segment spans residues 67–73 (SKGKSSH). The helical intramembrane region spans 74-94 (ILVFDEELFFIYLLPPIIFNA). At 95-112 (GFQVKKKKFFHNFLTIMS) the chain is on the cytoplasmic side. Residues 113–133 (FGVIGVFISTVIISFGTWWLF) traverse the membrane as a helical segment. Over 134–171 (PKLGFKGLSARDYLAIGTIFSSTDTVCTLQILHQDETP) the chain is Vacuolar. Residues 172 to 192 (LLYSLVFGEGVVNDATSVVLF) traverse the membrane as a helical segment. Residues 193-214 (NAVQKIQFESLTGWTALQVFGN) lie on the Cytoplasmic side of the membrane. A helical membrane pass occupies residues 215 to 235 (FLYLFSTSTLLGIGVGLITSF). At 236–250 (VLKTLYFGRHSTTRE) the chain is on the vacuolar side. The helical transmembrane segment at 251–267 (LAIMVLMAYLSYMLAEL) threads the bilayer. The Cytoplasmic portion of the chain corresponds to 268 to 273 (FSLSGI). The helical transmembrane segment at 274–291 (LTVFFCGVLMSHYASYNV) threads the bilayer. Residues 292–301 (TESSRITSRH) lie on the Vacuolar side of the membrane. Residues 302–322 (VFAMLSFIAETFIFLYVGTDA) traverse the membrane as a helical segment. Residues 323-342 (LDFTKWKTSSLSFGGTLGVS) are Cytoplasmic-facing. Residues 343–363 (GVITALVLLGRAAFVFPLSVL) traverse the membrane as a helical segment. Over 364-380 (TNFMNRHTERNESITFK) the chain is Vacuolar. Asparagine 374 carries N-linked (GlcNAc...) asparagine glycosylation. A helical membrane pass occupies residues 381 to 401 (HQVIIWWAGLMRGAVSIALAF). The Cytoplasmic segment spans residues 402 to 415 (KQFTYSGVTLDPVN). A helical transmembrane segment spans residues 416–436 (AAMVTNTTIVVLFTTLVFGFL). The Vacuolar segment spans residues 437-529 (TKPLVNYLLP…GPRRENQPEC (93 aa)).

The protein belongs to the monovalent cation:proton antiporter 1 (CPA1) transporter (TC 2.A.36) family. In terms of tissue distribution, expressed at very low levels in roots and shoots.

It localises to the vacuole membrane. The enzyme catalyses Na(+)(in) + H(+)(out) = Na(+)(out) + H(+)(in). The catalysed reaction is K(+)(in) + H(+)(out) = K(+)(out) + H(+)(in). May act in low affinity electroneutral exchange of protons for cations such as Na(+) or K(+) across membranes. May also exchange Li(+) and Cs(+) with a lower affinity. The protein is Sodium/hydrogen exchanger 4 (NHX4) of Arabidopsis thaliana (Mouse-ear cress).